The primary structure comprises 380 residues: MHFVIDRDIFVQNVNHVSKAVSSRTTIPILTGIKIVADHEGVTLTGSDSDISIETFIPLEEGDRQNVEVKQEGSIVLQAKVFAEIVKKLPEQEIEIHVQDSFVTTIRSGSSVFNLNGLDPDEYPRLPVLEEDHVFRLPQKILKDIIRQTVFAVSTQETRPVLTGVNFEIEDGILTCTATDSHRLAMRKVPVEKNDDELQFSNVVIPGKSLNELSKILDENEELLDIVVTENQTLFKLKNMLFFSRLLEGKYPVTKNMIPKEAKTSFAVHTKAFLQTLERALLLSREGKNQVINLKTLGDGVVEVTAITPEIGKVTENVATQGLEGEELRISFNGKNVIDALKVVDSESIHIAFTGAMSPFVLSPTDHDQSLHLFSPVRTY.

This sequence belongs to the beta sliding clamp family. In terms of assembly, forms a ring-shaped head-to-tail homodimer around DNA which binds and tethers DNA polymerases and other proteins to the DNA. The DNA replisome complex has a single clamp-loading complex (3 tau and 1 each of delta, delta', psi and chi subunits) which binds 3 Pol III cores (1 core on the leading strand and 2 on the lagging strand) each with a beta sliding clamp dimer. Additional proteins in the replisome are other copies of gamma, psi and chi, Ssb, DNA helicase and RNA primase.

The protein resides in the cytoplasm. In terms of biological role, confers DNA tethering and processivity to DNA polymerases and other proteins. Acts as a clamp, forming a ring around DNA (a reaction catalyzed by the clamp-loading complex) which diffuses in an ATP-independent manner freely and bidirectionally along dsDNA. Initially characterized for its ability to contact the catalytic subunit of DNA polymerase III (Pol III), a complex, multichain enzyme responsible for most of the replicative synthesis in bacteria; Pol III exhibits 3'-5' exonuclease proofreading activity. The beta chain is required for initiation of replication as well as for processivity of DNA replication. The sequence is that of Beta sliding clamp (dnaN) from Halalkalibacterium halodurans (strain ATCC BAA-125 / DSM 18197 / FERM 7344 / JCM 9153 / C-125) (Bacillus halodurans).